A 237-amino-acid polypeptide reads, in one-letter code: MSFLKSFPPPGPAEGLLRQQPDTEAVLNGKGLGTGTLYIAESRLSWLDGSGLGFSLEYPTISLHALSRDRSDCLGEHLYVMVNAKFEEESKEPVADEEEEDSDDDVEPITEFRFVPSDKSALEAMFTAMCECQALHPDPEDEDSDDYDGEEYDVEAHEQGQGDIPTFYTYEEGLSHLTAEGQATQERLEGMLSQSVSCQYNMAGVRTEDLIRDYEDGMEVDTTPTVAGQFEDADVDH.

Residue S2 is modified to N-acetylserine. S102, S144, S193, and S195 each carry phosphoserine. At T223 the chain carries Phosphothreonine.

Belongs to the pICln (TC 1.A.47) family. Component of the methylosome, a 20S complex containing at least PRMT5/SKB1, WDR77/MEP50 and CLNS1A/pICln. May mediate SNRPD1 and SNRPD3 methylation. Forms a 6S pICln-Sm complex composed of CLNS1A/pICln, SNRPD1, SNRPD2, SNRPE, SNRPF and SNRPG; ring-like structure where CLNS1A/pICln mimics additional Sm proteins and which is unable to assemble into the core snRNP. Interacts with LSM10 and LSM11.

It localises to the cytoplasm. The protein resides in the cytosol. The protein localises to the nucleus. It is found in the cytoskeleton. Functionally, involved in both the assembly of spliceosomal snRNPs and the methylation of Sm proteins. Chaperone that regulates the assembly of spliceosomal U1, U2, U4 and U5 small nuclear ribonucleoproteins (snRNPs), the building blocks of the spliceosome, and thereby plays an important role in the splicing of cellular pre-mRNAs. Most spliceosomal snRNPs contain a common set of Sm proteins SNRPB, SNRPD1, SNRPD2, SNRPD3, SNRPE, SNRPF and SNRPG that assemble in a heptameric protein ring on the Sm site of the small nuclear RNA to form the core snRNP (Sm core). In the cytosol, the Sm proteins SNRPD1, SNRPD2, SNRPE, SNRPF and SNRPG are trapped in an inactive 6S pICln-Sm complex by the chaperone CLNS1A that controls the assembly of the core snRNP. Dissociation by the SMN complex of CLNS1A from the trapped Sm proteins and their transfer to an SMN-Sm complex triggers the assembly of core snRNPs and their transport to the nucleus. The protein is Methylosome subunit pICln (CLNS1A) of Pongo abelii (Sumatran orangutan).